The chain runs to 515 residues: ATP synthase subunit alpha (515 aa).

Residue 169–176 (GDRQTGKT) coordinates ATP.

This sequence belongs to the ATPase alpha/beta chains family. In terms of assembly, F-type ATPases have 2 components, CF(1) - the catalytic core - and CF(0) - the membrane proton channel. CF(1) has five subunits: alpha(3), beta(3), gamma(1), delta(1), epsilon(1). CF(0) has three main subunits: a(1), b(2) and c(9-12). The alpha and beta chains form an alternating ring which encloses part of the gamma chain. CF(1) is attached to CF(0) by a central stalk formed by the gamma and epsilon chains, while a peripheral stalk is formed by the delta and b chains.

The protein resides in the cell inner membrane. It carries out the reaction ATP + H2O + 4 H(+)(in) = ADP + phosphate + 5 H(+)(out). Functionally, produces ATP from ADP in the presence of a proton gradient across the membrane. The alpha chain is a regulatory subunit. The sequence is that of ATP synthase subunit alpha from Neisseria gonorrhoeae (strain ATCC 700825 / FA 1090).